The sequence spans 264 residues: MRFKELILPLKIEEEELVEKFYEEGFFNFAIEEDKKGKKVLKIYLREGEPLPDFLKDWEIVDEKITTPKDWIVELEPFEIVEGIFIDPTEKINRRDAIVIKLSPGVAFGTGLHPTTRMSVFFLKKYLKEGNTVLDVGCGTGILAIAAKKLGASRVVAVDVDEQAVEVAEENVRKNDVDVLVKWSDLLSEVEGTFDIVVSNILAEIHVKLLEDVNRVTHRDSMLILSGIVDRKEDMVKRKASEHGWNVLERKQEREWVTLVMKRS.

Thr116, Gly137, Asp159, and Asn200 together coordinate S-adenosyl-L-methionine.

This sequence belongs to the methyltransferase superfamily. PrmA family.

The protein localises to the cytoplasm. The enzyme catalyses L-lysyl-[protein] + 3 S-adenosyl-L-methionine = N(6),N(6),N(6)-trimethyl-L-lysyl-[protein] + 3 S-adenosyl-L-homocysteine + 3 H(+). In terms of biological role, methylates ribosomal protein L11. This is Ribosomal protein L11 methyltransferase from Thermotoga maritima (strain ATCC 43589 / DSM 3109 / JCM 10099 / NBRC 100826 / MSB8).